We begin with the raw amino-acid sequence, 231 residues long: Large ribosomal subunit protein uL1 (231 aa).

It belongs to the universal ribosomal protein uL1 family. As to quaternary structure, part of the 50S ribosomal subunit.

Binds directly to 23S rRNA. The L1 stalk is quite mobile in the ribosome, and is involved in E site tRNA release. In terms of biological role, protein L1 is also a translational repressor protein, it controls the translation of the L11 operon by binding to its mRNA. This Verminephrobacter eiseniae (strain EF01-2) protein is Large ribosomal subunit protein uL1.